The sequence spans 399 residues: tRNA-specific 2-thiouridylase MnmA (399 aa).

Residues Ala-18–Ser-25 and Leu-44 contribute to the ATP site. Cys-112 functions as the Nucleophile in the catalytic mechanism. A disulfide bond links Cys-112 and Cys-213. An ATP-binding site is contributed by Gly-136. The interaction with tRNA stretch occupies residues Arg-163–Gln-165. Cys-213 functions as the Cysteine persulfide intermediate in the catalytic mechanism.

The protein belongs to the MnmA/TRMU family.

Its subcellular location is the cytoplasm. It carries out the reaction S-sulfanyl-L-cysteinyl-[protein] + uridine(34) in tRNA + AH2 + ATP = 2-thiouridine(34) in tRNA + L-cysteinyl-[protein] + A + AMP + diphosphate + H(+). Functionally, catalyzes the 2-thiolation of uridine at the wobble position (U34) of tRNA, leading to the formation of s(2)U34. This chain is tRNA-specific 2-thiouridylase MnmA, found in Rhizobium leguminosarum bv. trifolii (strain WSM2304).